The primary structure comprises 325 residues: Beta-ketoacyl-[acyl-carrier-protein] synthase III (325 aa).

Active-site residues include cysteine 119 and histidine 252. Residues 253 to 257 (QANIR) are ACP-binding. Asparagine 282 is a catalytic residue.

The protein belongs to the thiolase-like superfamily. FabH family. In terms of assembly, homodimer.

It is found in the cytoplasm. It carries out the reaction malonyl-[ACP] + acetyl-CoA + H(+) = 3-oxobutanoyl-[ACP] + CO2 + CoA. It functions in the pathway lipid metabolism; fatty acid biosynthesis. Functionally, catalyzes the condensation reaction of fatty acid synthesis by the addition to an acyl acceptor of two carbons from malonyl-ACP. Catalyzes the first condensation reaction which initiates fatty acid synthesis and may therefore play a role in governing the total rate of fatty acid production. Possesses both acetoacetyl-ACP synthase and acetyl transacylase activities. Its substrate specificity determines the biosynthesis of branched-chain and/or straight-chain of fatty acids. In Variovorax paradoxus (strain S110), this protein is Beta-ketoacyl-[acyl-carrier-protein] synthase III.